We begin with the raw amino-acid sequence, 213 residues long: Kiwellin (213 aa).

Positions 1–24 are cleaved as a signal peptide; the sequence is MAQLSLLVLSLFLTLISLPPPGAS. Intrachain disulfides connect Cys28–Cys60, Cys32–Cys44, and Cys38–Cys49. 4-hydroxyproline is present on residues Pro65 and Pro67. 4 disulfides stabilise this stretch: Cys72-Cys90, Cys80-Cys172, Cys119-Cys144, and Cys166-Cys182. A disordered region spans residues 91–121; that stretch reads SPPVTSSTPAKLTNNDFSEGGDGGGPSECDE. Over residues 93–107 the composition is skewed to polar residues; sequence PVTSSTPAKLTNNDF.

It belongs to the kiwellin family. Post-translationally, undergoes proteolytic cleavage by actinidin to produce kissper and KiTH. Three forms of KiTH are produced by cleavage at different sites.

It localises to the secreted. In terms of biological role, kissper is an anion-selective pore-forming peptide. This is Kiwellin from Actinidia chinensis var. chinensis (Chinese soft-hair kiwi).